The chain runs to 436 residues: 3-ketoacyl-CoA thiolase (436 aa).

Cys99 functions as the Acyl-thioester intermediate in the catalytic mechanism. Catalysis depends on proton acceptor residues His392 and Cys422.

The protein belongs to the thiolase-like superfamily. Thiolase family. As to quaternary structure, heterotetramer of two alpha chains (FadJ) and two beta chains (FadI).

It localises to the cytoplasm. It carries out the reaction an acyl-CoA + acetyl-CoA = a 3-oxoacyl-CoA + CoA. Its pathway is lipid metabolism; fatty acid beta-oxidation. In terms of biological role, catalyzes the final step of fatty acid oxidation in which acetyl-CoA is released and the CoA ester of a fatty acid two carbons shorter is formed. This chain is 3-ketoacyl-CoA thiolase, found in Escherichia coli O6:H1 (strain CFT073 / ATCC 700928 / UPEC).